The primary structure comprises 640 residues: MAKNTQTQALKILPLGGLHEIGKNTCVFEYDDEILLLDAGLAFPTDDMHGVNVVLPDMTYLRENREKIKGMVVTHGHEDHIGGIAYHLKQFDIPIIYGPRLAMALLRDKLEEAGMLERTNLQTVSPREMVRLGKSFVVEFIRNTHSIADSYCLAIHTPLGVVMHSGDFKIDHTPIDGEFFDLQKVAEYGEKGVLCLLSDSTNAEVPGITPSEASVIPNLDRVFSQAEGRLMVTTFASSVHRVNIILSLAQKHQRKVAVVGRSMLNVIAHARKLGYIKCPDNLFVPLKAARNLPDQQQLILTTGSQGEPLAAMTRISNGEHPQIKIRQGDTVVFSANPIPGNTIAVVNTIDRLMMQGANVIYGKHQGIHVSGHASQEEHKMLLALTRPKFFVPVHGEHRMLVKHSQMAQAQGIPSENIVIVNNGDVIELTGDRIRVAGQVPSGIELVDQAGIVHESTMAERQQMAEDGLVTVAAALSKTGTLLAYPEVHCRGVVMTIQPKLLEELIVRTIENFLTERWSEFTHGSNGSTEVSWNALQKELESSLQRLIKRELQSSPMVLLMLQTDTPIELDQVPQNVSTVSATSATPAPRKKVVLTKTPEPKVKAKPEKKVVTTAEPSAQPVSTTKVYRRSRKRSTTSVSS.

Histidine 75, histidine 77, aspartate 79, histidine 80, histidine 145, and aspartate 167 together coordinate Zn(2+). 368–372 (HVSGH) lines the substrate pocket. Residue histidine 394 participates in Zn(2+) binding. The interval 578–640 (TVSATSATPA…RKRSTTSVSS (63 aa)) is disordered. Basic and acidic residues predominate over residues 598 to 610 (PEPKVKAKPEKKV).

It belongs to the metallo-beta-lactamase superfamily. RNA-metabolizing metallo-beta-lactamase-like family. Bacterial RNase J subfamily. Homodimer, may be a subunit of the RNA degradosome. Zn(2+) is required as a cofactor.

The protein resides in the cytoplasm. An RNase that has 5'-3' exonuclease and possibly endoonuclease activity. Involved in maturation of rRNA and in some organisms also mRNA maturation and/or decay. The polypeptide is Ribonuclease J (Synechocystis sp. (strain ATCC 27184 / PCC 6803 / Kazusa)).